Reading from the N-terminus, the 231-residue chain is Ribose-5-phosphate isomerase A (231 aa).

Substrate-binding positions include 32 to 35, 85 to 88, and 98 to 101; these read TGST, DGAD, and KGGG. The active-site Proton acceptor is Glu-107. Lys-125 contacts substrate.

The protein belongs to the ribose 5-phosphate isomerase family. Homodimer.

It catalyses the reaction aldehydo-D-ribose 5-phosphate = D-ribulose 5-phosphate. Its pathway is carbohydrate degradation; pentose phosphate pathway; D-ribose 5-phosphate from D-ribulose 5-phosphate (non-oxidative stage): step 1/1. Its function is as follows. Catalyzes the reversible conversion of ribose-5-phosphate to ribulose 5-phosphate. The chain is Ribose-5-phosphate isomerase A from Burkholderia orbicola (strain MC0-3).